The sequence spans 747 residues: Protein TraI (747 aa).

Disordered regions lie at residues 510-594 (LNKE…PQSQ) and 624-652 (VEQQGTQPDHALRRGISRPGTGVGQTPPG). Residues 513–526 (ENTHERTERPEHRG) show a composition bias toward basic and acidic residues. Over residues 537–562 (QRPAADQHATGAAAVARAGDGRPAAG) the composition is skewed to low complexity.

Its function is as follows. The initiation process of transfer DNA synthesis requires the interaction of at least three plasmid-specific components (TraH, TraI, and TraJ) at the transfer origin resulting in the assembly of a specialized nucleoprotein complex - the relaxosome. Site and strand specific cleavage at the transfer origin is dependent on TraI and TraJ. This Escherichia coli protein is Protein TraI (traI).